A 232-amino-acid polypeptide reads, in one-letter code: uncharacterized protein (232 aa).

The first 32 residues, 1 to 32 (MTTSKIATAFKTATFALAAGAVALGLASPADA), serve as a signal peptide directing secretion.

This is an uncharacterized protein from Mycobacterium bovis (strain ATCC BAA-935 / AF2122/97).